The following is a 345-amino-acid chain: GTPase Obg (345 aa).

Positions 1–158 (MFIDSVKITL…RLVRLELKLI (158 aa)) constitute an Obg domain. Positions 159 to 339 (ADVGLVGFPN…LKFMLLEEIK (181 aa)) constitute an OBG-type G domain. GTP contacts are provided by residues 165-172 (GFPNVGKS), 190-194 (FTTLT), 212-215 (DIPG), 280-283 (SKSD), and 320-322 (SSL). Residues S172 and T192 each contribute to the Mg(2+) site.

This sequence belongs to the TRAFAC class OBG-HflX-like GTPase superfamily. OBG GTPase family. As to quaternary structure, monomer. It depends on Mg(2+) as a cofactor.

The protein localises to the cytoplasm. An essential GTPase which binds GTP, GDP and possibly (p)ppGpp with moderate affinity, with high nucleotide exchange rates and a fairly low GTP hydrolysis rate. Plays a role in control of the cell cycle, stress response, ribosome biogenesis and in those bacteria that undergo differentiation, in morphogenesis control. This Campylobacter jejuni subsp. jejuni serotype O:6 (strain 81116 / NCTC 11828) protein is GTPase Obg.